A 384-amino-acid polypeptide reads, in one-letter code: Dual-specificity RNA methyltransferase RlmN (384 aa).

Catalysis depends on Glu-105, which acts as the Proton acceptor. The Radical SAM core domain occupies 111–350; that stretch reads EDDRATLCVS…TIVRKTRGDD (240 aa). The cysteines at positions 118 and 355 are disulfide-linked. Cys-125, Cys-129, and Cys-132 together coordinate [4Fe-4S] cluster. S-adenosyl-L-methionine contacts are provided by residues 179–180, Ser-211, 233–235, and Asn-312; these read GE and SLH. Cys-355 acts as the S-methylcysteine intermediate in catalysis.

It belongs to the radical SAM superfamily. RlmN family. [4Fe-4S] cluster serves as cofactor.

It localises to the cytoplasm. The catalysed reaction is adenosine(2503) in 23S rRNA + 2 reduced [2Fe-2S]-[ferredoxin] + 2 S-adenosyl-L-methionine = 2-methyladenosine(2503) in 23S rRNA + 5'-deoxyadenosine + L-methionine + 2 oxidized [2Fe-2S]-[ferredoxin] + S-adenosyl-L-homocysteine. It catalyses the reaction adenosine(37) in tRNA + 2 reduced [2Fe-2S]-[ferredoxin] + 2 S-adenosyl-L-methionine = 2-methyladenosine(37) in tRNA + 5'-deoxyadenosine + L-methionine + 2 oxidized [2Fe-2S]-[ferredoxin] + S-adenosyl-L-homocysteine. In terms of biological role, specifically methylates position 2 of adenine 2503 in 23S rRNA and position 2 of adenine 37 in tRNAs. m2A2503 modification seems to play a crucial role in the proofreading step occurring at the peptidyl transferase center and thus would serve to optimize ribosomal fidelity. This is Dual-specificity RNA methyltransferase RlmN from Shigella boydii serotype 18 (strain CDC 3083-94 / BS512).